A 495-amino-acid chain; its full sequence is Glycerol kinase (495 aa).

T11 is a binding site for ADP. T11, T12, and S13 together coordinate ATP. T11 provides a ligand contact to sn-glycerol 3-phosphate. ADP is bound at residue R15. R81, E82, Y133, and D242 together coordinate sn-glycerol 3-phosphate. Residues R81, E82, Y133, D242, and Q243 each contribute to the glycerol site. ADP contacts are provided by T264 and G307. ATP contacts are provided by T264, G307, Q311, and G410. Residue G410 participates in ADP binding.

It belongs to the FGGY kinase family.

It carries out the reaction glycerol + ATP = sn-glycerol 3-phosphate + ADP + H(+). The protein operates within polyol metabolism; glycerol degradation via glycerol kinase pathway; sn-glycerol 3-phosphate from glycerol: step 1/1. With respect to regulation, inhibited by fructose 1,6-bisphosphate (FBP). In terms of biological role, key enzyme in the regulation of glycerol uptake and metabolism. Catalyzes the phosphorylation of glycerol to yield sn-glycerol 3-phosphate. The polypeptide is Glycerol kinase (Roseobacter denitrificans (strain ATCC 33942 / OCh 114) (Erythrobacter sp. (strain OCh 114))).